The following is a 425-amino-acid chain: UPF0597 protein VFMJ11_0655 (425 aa).

Belongs to the UPF0597 family.

This Aliivibrio fischeri (strain MJ11) (Vibrio fischeri) protein is UPF0597 protein VFMJ11_0655.